We begin with the raw amino-acid sequence, 166 residues long: Lipoprotein signal peptidase (166 aa).

Transmembrane regions (helical) follow at residues 11 to 31 (VWLWLSLLLLVVDFASKTLVV), 42 to 62 (LLPVFSITYVHNYGAAYSFLS), 67 to 87 (WQRWFLSAIAIAISGLLVWWL), and 90 to 110 (LPATNKVLCAAYSLVLAGAIG). Catalysis depends on residues Asp-123 and Asp-141. Residues 133-153 (HFPVFNVADCAICIGAALLLF) traverse the membrane as a helical segment.

This sequence belongs to the peptidase A8 family.

It localises to the cell inner membrane. The enzyme catalyses Release of signal peptides from bacterial membrane prolipoproteins. Hydrolyzes -Xaa-Yaa-Zaa-|-(S,diacylglyceryl)Cys-, in which Xaa is hydrophobic (preferably Leu), and Yaa (Ala or Ser) and Zaa (Gly or Ala) have small, neutral side chains.. It functions in the pathway protein modification; lipoprotein biosynthesis (signal peptide cleavage). Functionally, this protein specifically catalyzes the removal of signal peptides from prolipoproteins. The sequence is that of Lipoprotein signal peptidase from Pseudoalteromonas translucida (strain TAC 125).